The primary structure comprises 45 residues: Thymosin beta-15A (45 aa).

2 stretches are compositionally biased toward basic and acidic residues: residues 1–27 (MSDK…EEKN) and 35–45 (IQQEKECVQTS). The interval 1–45 (MSDKPDLSEVEKFDRSKLKKTNTEEKNTLPSKETIQQEKECVQTS) is disordered.

The protein belongs to the thymosin beta family. In terms of tissue distribution, neuroblastoma-specific.

It localises to the cytoplasm. The protein resides in the cytoskeleton. Functionally, plays an important role in the organization of the cytoskeleton. Binds to and sequesters actin monomers (G actin) and therefore inhibits actin polymerization. The chain is Thymosin beta-15A (TMSB15A) from Homo sapiens (Human).